Reading from the N-terminus, the 97-residue chain is Cell division protein FtsL (97 aa).

Over 1–11 (MSRLFVKRLPT) the chain is Cytoplasmic. A helical membrane pass occupies residues 12 to 32 (GSFLMLLLYIGLLLSAIAVAY). Residues 33–97 (STYWNRQLLN…DPAEVRMVAP (65 aa)) lie on the Periplasmic side of the membrane.

It belongs to the FtsL family. As to quaternary structure, part of a complex composed of FtsB, FtsL and FtsQ.

Its subcellular location is the cell inner membrane. Functionally, essential cell division protein. May link together the upstream cell division proteins, which are predominantly cytoplasmic, with the downstream cell division proteins, which are predominantly periplasmic. This is Cell division protein FtsL from Pseudomonas aeruginosa (strain ATCC 15692 / DSM 22644 / CIP 104116 / JCM 14847 / LMG 12228 / 1C / PRS 101 / PAO1).